Reading from the N-terminus, the 131-residue chain is MGGGQKGLESAIVCLLVLGLVLEQVQVEGVDCGANPFKVACFNSCLLGPSTVFQCADFCACRLPAGLASVRSSDEPNAIEYCSLGCRSSVCDNMINTADNSTEEMKLYVKRCGVACDSFCKGDTLLASLDD.

The N-terminal stretch at 1–29 (MGGGQKGLESAIVCLLVLGLVLEQVQVEG) is a signal peptide. Residues 67–131 (LASVRSSDEP…GDTLLASLDD (65 aa)) constitute a propeptide, acidic domain.

Belongs to the plant thionin (TC 1.C.44) family. In terms of processing, is disulfide-linked. Developing endosperm.

The protein resides in the secreted. Functionally, thionins are small plant proteins which are toxic to animal cells. They seem to exert their toxic effect at the level of the cell membrane. Their precise function is not known. In Triticum aestivum (Wheat), this protein is Type-5 thionin (TTHV).